A 436-amino-acid chain; its full sequence is 3-ketoacyl-CoA thiolase (436 aa).

C99 (acyl-thioester intermediate) is an active-site residue. Catalysis depends on proton acceptor residues H392 and C422.

It belongs to the thiolase-like superfamily. Thiolase family. As to quaternary structure, heterotetramer of two alpha chains (FadJ) and two beta chains (FadI).

It is found in the cytoplasm. The enzyme catalyses an acyl-CoA + acetyl-CoA = a 3-oxoacyl-CoA + CoA. It participates in lipid metabolism; fatty acid beta-oxidation. In terms of biological role, catalyzes the final step of fatty acid oxidation in which acetyl-CoA is released and the CoA ester of a fatty acid two carbons shorter is formed. The protein is 3-ketoacyl-CoA thiolase of Escherichia coli O6:H1 (strain CFT073 / ATCC 700928 / UPEC).